Reading from the N-terminus, the 228-residue chain is Cytochrome c oxidase subunit 2 (228 aa).

Residues 1–26 (MRTWSNFNLQNSASPLMEQIIFFHDH) are Mitochondrial intermembrane-facing. A helical membrane pass occupies residues 27–48 (TLIILIMITILVGYIMINLFFN). The Mitochondrial matrix segment spans residues 49-62 (KFINRFFLVGQMIE). The chain crosses the membrane as a helical span at residues 63 to 82 (LIWTVLPAITLIFIALPSLR). Topologically, residues 83 to 228 (LLYLLDELNN…FINWINNYSY (146 aa)) are mitochondrial intermembrane. The Cu cation site is built by His161, Cys196, Glu198, Cys200, His204, and Met207. Glu198 provides a ligand contact to Mg(2+).

Belongs to the cytochrome c oxidase subunit 2 family. In terms of assembly, component of the cytochrome c oxidase (complex IV, CIV), a multisubunit enzyme composed of a catalytic core of 3 subunits and several supernumerary subunits. The complex exists as a monomer or a dimer and forms supercomplexes (SCs) in the inner mitochondrial membrane with ubiquinol-cytochrome c oxidoreductase (cytochrome b-c1 complex, complex III, CIII). It depends on Cu cation as a cofactor.

Its subcellular location is the mitochondrion inner membrane. The catalysed reaction is 4 Fe(II)-[cytochrome c] + O2 + 8 H(+)(in) = 4 Fe(III)-[cytochrome c] + 2 H2O + 4 H(+)(out). In terms of biological role, component of the cytochrome c oxidase, the last enzyme in the mitochondrial electron transport chain which drives oxidative phosphorylation. The respiratory chain contains 3 multisubunit complexes succinate dehydrogenase (complex II, CII), ubiquinol-cytochrome c oxidoreductase (cytochrome b-c1 complex, complex III, CIII) and cytochrome c oxidase (complex IV, CIV), that cooperate to transfer electrons derived from NADH and succinate to molecular oxygen, creating an electrochemical gradient over the inner membrane that drives transmembrane transport and the ATP synthase. Cytochrome c oxidase is the component of the respiratory chain that catalyzes the reduction of oxygen to water. Electrons originating from reduced cytochrome c in the intermembrane space (IMS) are transferred via the dinuclear copper A center (CU(A)) of subunit 2 and heme A of subunit 1 to the active site in subunit 1, a binuclear center (BNC) formed by heme A3 and copper B (CU(B)). The BNC reduces molecular oxygen to 2 water molecules using 4 electrons from cytochrome c in the IMS and 4 protons from the mitochondrial matrix. This is Cytochrome c oxidase subunit 2 (COII) from Galleria mellonella (Greater wax moth).